We begin with the raw amino-acid sequence, 403 residues long: Acetylornithine aminotransferase (403 aa).

Pyridoxal 5'-phosphate contacts are provided by residues 107–108 and F140; that span reads GA. Residue R143 participates in N(2)-acetyl-L-ornithine binding. 225–228 provides a ligand contact to pyridoxal 5'-phosphate; the sequence is DEVQ. K254 is modified (N6-(pyridoxal phosphate)lysine). S282 is a binding site for N(2)-acetyl-L-ornithine. Position 283 (T283) interacts with pyridoxal 5'-phosphate.

It belongs to the class-III pyridoxal-phosphate-dependent aminotransferase family. ArgD subfamily. As to quaternary structure, homodimer. The cofactor is pyridoxal 5'-phosphate.

The protein localises to the cytoplasm. It carries out the reaction N(2)-acetyl-L-ornithine + 2-oxoglutarate = N-acetyl-L-glutamate 5-semialdehyde + L-glutamate. Its pathway is amino-acid biosynthesis; L-arginine biosynthesis; N(2)-acetyl-L-ornithine from L-glutamate: step 4/4. The polypeptide is Acetylornithine aminotransferase (Vibrio cholerae serotype O1 (strain ATCC 39315 / El Tor Inaba N16961)).